We begin with the raw amino-acid sequence, 62 residues long: Large ribosomal subunit protein bL28 (62 aa).

This sequence belongs to the bacterial ribosomal protein bL28 family.

The protein is Large ribosomal subunit protein bL28 of Desulforamulus reducens (strain ATCC BAA-1160 / DSM 100696 / MI-1) (Desulfotomaculum reducens).